The chain runs to 3707 residues: Basement membrane-specific heparan sulfate proteoglycan core protein (3707 aa).

A signal peptide spans 1–21; the sequence is MGQRAVGSLLLGLLLHARLLA. O-linked (Xyl...) (heparan sulfate) serine glycosylation is found at Ser65, Ser71, and Ser76. Positions 80 to 191 constitute an SEA domain; it reads QMVYFRALVN…WGFKFRRLGT (112 aa). Asn89 is a glycosylation site (N-linked (GlcNAc...) asparagine). 4 LDL-receptor class A domains span residues 195–234, 281–319, 320–359, and 360–403; these read FPRV…ELNC, GPSA…ELGC, ASPP…EANC, and SVKQ…EFGC. Cystine bridges form between Cys199–Cys212, Cys206–Cys225, Cys219–Cys234, Cys285–Cys297, Cys292–Cys310, Cys304–Cys319, Cys325–Cys337, Cys332–Cys350, Cys344–Cys359, Cys368–Cys381, Cys375–Cys394, Cys388–Cys403, and Cys428–Cys479. N-linked (GlcNAc...) asparagine glycosylation occurs at Asn358. Positions 404–504 constitute an Ig-like C2-type 1 domain; sequence MPPQVVTPPQ…VLELVPQRGP (101 aa). The region spanning 521 to 530 is the Laminin EGF-like 1; first part domain; the sequence is CFCFGVTNVC. In terms of domain architecture, Laminin IV type A 1 spans 538-730; that stretch reads DQIRLSFDQP…IHGRAHSVEE (193 aa). Asn554 carries N-linked (GlcNAc...) asparagine glycosylation. Residues 731–763 form the Laminin EGF-like 1; second part domain; that stretch reads CRCPIGYSGLSCESCDAHFTRVPGGPYLGTCSG. Disulfide bonds link Cys764–Cys773, Cys766–Cys780, Cys783–Cys792, Cys795–Cys811, Cys814–Cys829, Cys816–Cys839, Cys842–Cys851, Cys854–Cys869, Cys879–Cys892, Cys894–Cys903, and Cys906–Cys921. Laminin EGF-like domains are found at residues 764-813 and 814-871; these read CNCN…ACRP and CPCP…KCRP. Residues 879–923 form the Laminin EGF-like 4; truncated domain; sequence CDERGSLGTSGETCRCKNNVVGRLCNECSDGSFHLSKQNPDGCLK. The Laminin EGF-like 5; first part domain maps to 924 to 933; that stretch reads CFCMGVSRQC. The Laminin IV type A 2 domain maps to 941–1125; sequence AQVLGASEQP…GQDSAREVEQ (185 aa). A Laminin EGF-like 5; second part domain is found at 1126–1158; sequence CTCPPGYRGPSCQDCDTGYTRVPSGLYLGTCER. 12 disulfide bridges follow: Cys1159-Cys1168, Cys1161-Cys1175, Cys1178-Cys1187, Cys1190-Cys1206, Cys1209-Cys1224, Cys1211-Cys1234, Cys1237-Cys1246, Cys1249-Cys1263, Cys1275-Cys1287, Cys1277-Cys1293, Cys1295-Cys1304, and Cys1307-Cys1322. Laminin EGF-like domains are found at residues 1159–1208, 1209–1265, and 1275–1324; these read CNCH…DCQP, CPCY…PCHR, and CGCD…GCLP. Residues 1325 to 1334 form the Laminin EGF-like 9; first part domain; the sequence is CFCMGVTQQC. In terms of domain architecture, Laminin IV type A 3 spans 1344-1529; it reads ISTHFAPGDF…SGPRALEVEE (186 aa). The 33-residue stretch at 1530-1562 folds into the Laminin EGF-like 9; second part domain; that stretch reads CRCPPGYVGLSCQDCAPGYTRTGSGLYLGQCEL. 8 cysteine pairs are disulfide-bonded: Cys1563–Cys1572, Cys1565–Cys1579, Cys1582–Cys1591, Cys1594–Cys1610, Cys1613–Cys1628, Cys1615–Cys1638, Cys1641–Cys1650, and Cys1653–Cys1668. 2 Laminin EGF-like domains span residues 1563–1612 and 1613–1670; these read CECN…DCQP and CACP…RCQP. Ig-like C2-type domains are found at residues 1677–1771, 1772–1865, 1866–1954, 1955–2049, 2050–2148, 2149–2244, 2245–2343, 2344–2436, 2437–2532, 2533–2619, 2620–2720, 2721–2809, 2810–2895, and 2896–2980; these read EVQI…KPIM, VTVE…STAP, VASI…GGSG, PRVQ…PAPA, SPAP…PGVV, PPIR…PAPG, LAQP…RLRS, PVIS…PPTV, SVLP…APGT, PQVQ…VESP, PYAT…GGST, PTVQ…ALPS, VLIN…LVQA, and LPQI…LQVP. Residues 1713-1733 form a disordered region; the sequence is DGRPLPSSAQQRHQGSELHFP. 3 cysteine pairs are disulfide-bonded: Cys1792–Cys1839, Cys1886–Cys1932, and Cys1976–Cys2021. The segment at 2039–2061 is disordered; sequence SPSTNSPPAPASPAPIRIESSSS. A compositionally biased stretch (low complexity) spans 2052-2061; that stretch reads APIRIESSSS. 3 disulfides stabilise this stretch: Cys2073/Cys2118, Cys2170/Cys2215, and Cys2268/Cys2313. Residues Asn2336, Asn2394, and Asn2427 are each glycosylated (N-linked (GlcNAc...) asparagine). A disulfide bridge links Cys2365 with Cys2413. 2 cysteine pairs are disulfide-bonded: Cys2456-Cys2506 and Cys2554-Cys2599. Residue Asn2600 is glycosylated (N-linked (GlcNAc...) asparagine). Residues Cys2641 and Cys2686 are joined by a disulfide bond. 2 cysteine pairs are disulfide-bonded: Cys2831-Cys2876 and Cys2917-Cys2962. The 179-residue stretch at 2984 to 3162 folds into the Laminin G-like 1 domain; that stretch reads IPYFTQTPYS…VNLTTHGISH (179 aa). Residues Asn3098 and Asn3154 are each glycosylated (N-linked (GlcNAc...) asparagine). Cystine bridges form between Cys3137–Cys3163, Cys3166–Cys3177, Cys3171–Cys3187, Cys3204–Cys3216, and Cys3229–Cys3238. The 79-residue stretch at 3163–3241 folds into the EGF-like domain; the sequence is CPTCQDRPCQ…GRSGVRCEEG (79 aa). A Laminin G-like 2 domain is found at 3245-3425; sequence TTPSMSGAGS…VGQCYDSSPC (181 aa). N-linked (GlcNAc...) asparagine glycosylation is present at Asn3385. Disulfide bonds link Cys3393–Cys3419, Cys3425–Cys3436, Cys3430–Cys3446, Cys3448–Cys3457, Cys3464–Cys3476, Cys3470–Cys3481, and Cys3483–Cys3492. A glycan (O-linked (Xyl...) (chondroitin sulfate) serine) is linked at Ser3510. The Laminin G-like 3 domain maps to 3518-3705; that stretch reads QYGAYFYDNG…AQAGANTRPC (188 aa). Ca(2+)-binding residues include Asp3574 and Leu3591. The mediates motor neuron attachment stretch occupies residues 3615 to 3617; it reads LRE. Positions 3641 and 3643 each coordinate Ca(2+). An intrachain disulfide couples Cys3671 to Cys3705. The interval 3680 to 3707 is disordered; it reads ARPGAPPPQPLDLQHRAQAGANTRPCPS.

In terms of assembly, has a strong tendency to aggregate in dimers or stellate structures. Interacts with other basement membrane components such as laminin, prolargin and collagen type IV. Interacts with COL13A1. Interacts with FGFBP1. Interacts with VWA1. Interacts (via C-terminus) with ECM1 (via C-terminus). Interacts with SVEP1. Proteolytic processing produces the C-terminal angiogenic peptide, endorepellin. This peptide can be further processed to produce the LG3 peptide. In terms of processing, O-glycosylated. Contains three heparan sulfate chains. Also contains chondroitin sulfate.

The protein resides in the secreted. Its subcellular location is the extracellular space. The protein localises to the extracellular matrix. It is found in the basement membrane. Its function is as follows. Integral component of basement membranes. Component of the glomerular basement membrane (GBM), responsible for the fixed negative electrostatic membrane charge, and which provides a barrier which is both size- and charge-selective. It serves as an attachment substrate for cells. Plays essential roles in vascularization. Critical for normal heart development and for regulating the vascular response to injury. Also required for avascular cartilage development. In terms of biological role, anti-angiogenic and anti-tumor peptide that inhibits endothelial cell migration, collagen-induced endothelial tube morphogenesis and blood vessel growth in the chorioallantoic membrane. Blocks endothelial cell adhesion to fibronectin and type I collagen. Anti-tumor agent in neovascularization. Interaction with its ligand, integrin alpha2/beta1, is required for the anti-angiogenic properties. Evokes a reduction in phosphorylation of receptor tyrosine kinases via alpha2/beta1 integrin-mediated activation of the tyrosine phosphatase, PTPN6. Has anti-angiogenic properties that require binding of calcium ions for full activity. The protein is Basement membrane-specific heparan sulfate proteoglycan core protein (Hspg2) of Mus musculus (Mouse).